The primary structure comprises 425 residues: Caveolae-associated protein 2 (425 aa).

Residues 1-42 (MGEDAAQAEKFQHPGSDMRQEKPSSPSPMPSSTPSPSLNLGN) form a disordered region. N-acetylglycine is present on glycine 2. The interaction with CAVIN1 stretch occupies residues 2–168 (GEDAAQAEKF…IFQEENEIPA (167 aa)). Over residues 10 to 22 (KFQHPGSDMRQEK) the composition is skewed to basic and acidic residues. 4 positions are modified to phosphoserine: serine 27, serine 35, serine 37, and serine 51. Coiled-coil stretches lie at residues 61 to 82 (LLDK…MEQR) and 125 to 154 (TRAV…RRNH). Positions 62-100 (LDKLVNMLDAVQENQHKMEQRQISLEGSVKGIQNDLTKL) are leucine-zipper. A phosphothreonine mark is found at threonine 196 and threonine 199. Disordered regions lie at residues 199-234 (TVDL…IKRS) and 271-425 (IKKS…HQTS). 3 positions are modified to phosphoserine: serine 203, serine 204, and serine 218. Over residues 203-219 (SSDDDLPHDEEALEDSA) the composition is skewed to acidic residues. Positions 210–268 (HDEEALEDSAEEKVEESRAEKIKRSSLKKVDSLKKAFSRQNIEKKMNKLGTKIVSVERR) form a coiled coil. Positions 220-234 (EEKVEESRAEKIKRS) are enriched in basic and acidic residues. Residues 274-287 (SLTSNHQKISSGKS) are compositionally biased toward polar residues. Phosphoserine occurs at positions 283, 284, 287, 288, and 293. Residues 303-317 (REGESHAENETKSED) are compositionally biased toward basic and acidic residues. Phosphoserine is present on residues serine 332, serine 341, serine 366, and serine 370. At threonine 375 the chain carries Phosphothreonine. Residues 376–385 (IVEDEEEESV) are compositionally biased toward acidic residues. A Phosphotyrosine modification is found at tyrosine 395. Serine 403 bears the Phosphoserine mark.

Belongs to the CAVIN family. Component of the CAVIN complex composed of CAVIN1, CAVIN2, CAVIN3 and CAVIN4. Binds to PRKCA in the presence of phosphatidylserine. Interacts with CAVIN4; this augments the transactivation of NPPA by CAVIN4. Interacts with CAVIN1. Interacts with CAV3. Phosphorylated on Ser residues. As to expression, highly expressed in heart and lung, and expressed at lower levels in brain, kidney, liver, pancreas, placenta, and skeletal muscle.

Its subcellular location is the cytoplasm. The protein resides in the cytosol. It is found in the membrane. The protein localises to the caveola. Its function is as follows. Plays an important role in caveolar biogenesis and morphology. Regulates caveolae morphology by inducing membrane curvature within caveolae. Plays a role in caveola formation in a tissue-specific manner. Required for the formation of caveolae in the lung and fat endothelia but not in the heart endothelia. Negatively regulates the size or stability of CAVIN complexes in the lung endothelial cells. May play a role in targeting PRKCA to caveolae. This chain is Caveolae-associated protein 2, found in Homo sapiens (Human).